The sequence spans 568 residues: MAGIDNKAAVMGEWFDCSTTNHRKRSKAELGREFSLNYIKNEDSLQTTFQESSRGALRERIAARSGFNAPWLNTEDILQSKSLTISSPGLSPATLLESPVFLSNPLLSPTTGKLSSVPSDKAKAELFDDITTSLAFQTISGSGLDPTNIALEPDDSQDYEERQLGGLGDSMACCAPADDGYNWRKYGQKLVKGSEYPRSYYKCTHPNCEAKKKVERSREGHIIEIIYTGDHIHSKPPPNRRSGIGSSGTGQDMQIDATEYEGFAGTNENIEWTSPVSAELEYGSHSGSMQVQNGTHQFGYGDAAADALYRDENEDDRTSHMSVSLTYDGEVEESESKRRKLEAYATETSGSTRASREPRVVVQTTSDIDILDDGYRWRKYGQKVVKGNPNPRSYYKCTANGCTVTKHVERASDDFKSVLTTYIGKHTHVVPAARNSSHVGAGSSGTLQGSLATQTHNHNVHYPMPHSRSEGLATANSSLFDFQSHLRHPTGFSVYIGQSELSDLSMPGLTIGQEKLTSLQAPDIGDPTGLMLQLAAQPKVEPVSPQQGLDLSASSLICREMLSRLRQI.

Positions 172-236 (ACCAPADDGY…YTGDHIHSKP (65 aa)) form a DNA-binding region, WRKY 1. Residues Cys-203, Cys-208, His-231, and His-233 each contribute to the Zn(2+) site. Disordered regions lie at residues 230-252 (DHIHSKPPPNRRSGIGSSGTGQD) and 337-360 (KRRKLEAYATETSGSTRASREPRV). The WRKY 2 DNA-binding region spans 366–431 (SDIDILDDGY…YIGKHTHVVP (66 aa)). 4 residues coordinate Zn(2+): Cys-397, Cys-402, His-426, and His-428.

This sequence belongs to the WRKY group I family.

The protein resides in the nucleus. Its function is as follows. Transcription factor. Interacts specifically with the W box (5'-(T)TGAC[CT]-3'), a frequently occurring elicitor-responsive cis-acting element. This chain is Probable WRKY transcription factor 34 (WRKY34), found in Arabidopsis thaliana (Mouse-ear cress).